We begin with the raw amino-acid sequence, 140 residues long: Hemoglobin subunit beta (140 aa).

The Globin domain occupies 1–140; it reads GGSDVSAFLA…VGEALAKGYH (140 aa). Residues His-57 and His-86 each coordinate heme b.

Belongs to the globin family. Heterotetramer of either two alpha-B chains or two alpha-C chains and two beta chains.

The beta chain is a component of adult hemoglobins B. And C. The chain is Hemoglobin subunit beta (HBB) from Aquarana catesbeiana (American bullfrog).